A 505-amino-acid chain; its full sequence is MVSIRPDEISSIIRQQIEQYSQDVKVENVGTVLQVGDGIARIYGLQQVMSGELVEFEDGTTGIALNLEEDNVGAVLMGEGRNIQEGSTVKATGKIAQIPVGDALVGRVVSPLGAPLDGKGEIAATENRLIESPAPGIIARRSVHEPMQTGITAIDAMIPIGRGQRELIIGDRQTGKTAIAIDTILNQKGEDVICVYVAIGQKASSVANIIEVLRERGALDYTVVVAANASEPATLQYLAPYAGAAIAEYFMCKGKATLVIYDDLTKQAQAYRQMSLLLRRPPGREAYPGDVFYLHSRLLERAAKLSDALGGGSMTALPVIETQAGDVSAYIPTNVISITDGQIFLSSDLFNSGLRPAINVGISVSRVGSAAQTKAIKKIAGTLKLELAQFDELAAFAQFASDLDKATQNQLARGQRLRELLKQPQFSPLILAEQVAVVYAGVKGLIDEIPVNQVTAFVSELRSYLKTSKPEFIEKVQSSKQLDDAAEALLKEAIAEVKKNILAAV.

Gly-170–Thr-177 serves as a coordination point for ATP.

It belongs to the ATPase alpha/beta chains family. F-type ATPases have 2 components, CF(1) - the catalytic core - and CF(0) - the membrane proton channel. CF(1) has five subunits: alpha(3), beta(3), gamma(1), delta(1), epsilon(1). CF(0) has four main subunits: a(1), b(1), b'(1) and c(9-12).

The protein localises to the cellular thylakoid membrane. It catalyses the reaction ATP + H2O + 4 H(+)(in) = ADP + phosphate + 5 H(+)(out). Its function is as follows. Produces ATP from ADP in the presence of a proton gradient across the membrane. The alpha chain is a regulatory subunit. The polypeptide is ATP synthase subunit alpha (Synechococcus elongatus (strain ATCC 33912 / PCC 7942 / FACHB-805) (Anacystis nidulans R2)).